Reading from the N-terminus, the 261-residue chain is Ribosomal RNA small subunit methyltransferase A (261 aa).

S-adenosyl-L-methionine-binding residues include His-12, Leu-14, Gly-39, Glu-60, Asp-81, and Asn-104.

Belongs to the class I-like SAM-binding methyltransferase superfamily. rRNA adenine N(6)-methyltransferase family. RsmA subfamily.

The protein resides in the cytoplasm. It carries out the reaction adenosine(1518)/adenosine(1519) in 16S rRNA + 4 S-adenosyl-L-methionine = N(6)-dimethyladenosine(1518)/N(6)-dimethyladenosine(1519) in 16S rRNA + 4 S-adenosyl-L-homocysteine + 4 H(+). Its function is as follows. Specifically dimethylates two adjacent adenosines (A1518 and A1519) in the loop of a conserved hairpin near the 3'-end of 16S rRNA in the 30S particle. May play a critical role in biogenesis of 30S subunits. The sequence is that of Ribosomal RNA small subunit methyltransferase A from Albidiferax ferrireducens (strain ATCC BAA-621 / DSM 15236 / T118) (Rhodoferax ferrireducens).